The chain runs to 108 residues: Replication restart protein PriB (108 aa).

The SSB domain maps to 8–108 (IDNSFSVMGV…LHAEQIEFID (101 aa)).

It belongs to the PriB family. Homodimer. Interacts with PriA and DnaT. Component of the replication restart primosome. Primosome assembly occurs via a 'hand-off' mechanism. PriA binds to replication forks, subsequently PriB then DnaT bind; DnaT then displaces ssDNA to generate the helicase loading substrate.

Involved in the restart of stalled replication forks, which reloads the replicative helicase on sites other than the origin of replication; the PriA-PriB pathway is the major replication restart pathway. During primosome assembly it facilitates complex formation between PriA and DnaT on DNA; stabilizes PriA on DNA. Stimulates the DNA unwinding activity of PriA helicase. The sequence is that of Replication restart protein PriB from Haemophilus influenzae (strain ATCC 51907 / DSM 11121 / KW20 / Rd).